Consider the following 1153-residue polypeptide: PPi-type phosphoenolpyruvate carboxykinase 3 (1153 aa).

The stretch at Arg1085 to Glu1131 forms a coiled coil.

It belongs to the PPi-type phosphoenolpyruvate carboxykinase family. Monomer and trimer; forms heterotrimers with PEPCK1 and PEPCK2.

Its subcellular location is the cytoplasm. It localises to the cytosol. The enzyme catalyses oxaloacetate + diphosphate = phosphoenolpyruvate + phosphate + CO2. In terms of biological role, inorganic pyrophosphate (PPi)-dependent phosphoenolpyruvate carboxykinase, which regulates the carbon flow of the central metabolism by fixing CO(2) to phosphoenolpyruvate to produce oxaloacetate. Can also produce pyruvate and diphosphate from phosphoenolpyruvate and phosphate. The chain is PPi-type phosphoenolpyruvate carboxykinase 3 from Entamoeba histolytica (strain ATCC 30459 / HM-1:IMSS / ABRM).